The chain runs to 509 residues: Glycogen synthase (509 aa).

ADP-alpha-D-glucose is bound at residue K47.

This sequence belongs to the glycosyltransferase 1 family. Bacterial/plant glycogen synthase subfamily.

The catalysed reaction is [(1-&gt;4)-alpha-D-glucosyl](n) + ADP-alpha-D-glucose = [(1-&gt;4)-alpha-D-glucosyl](n+1) + ADP + H(+). Its pathway is glycan biosynthesis; glycogen biosynthesis. Synthesizes alpha-1,4-glucan chains using ADP-glucose. The sequence is that of Glycogen synthase from Xanthomonas euvesicatoria pv. vesicatoria (strain 85-10) (Xanthomonas campestris pv. vesicatoria).